The chain runs to 423 residues: Pentamidine resistance factor, mitochondrial (423 aa).

The chain crosses the membrane as a helical span at residues 199–219; sequence PVFFTLVFIFEEVSVLIFTFF.

In terms of assembly, interacts with COX18. This interaction may be essential for its insertion into mitochondrial inner membrane.

The protein localises to the mitochondrion inner membrane. In terms of biological role, probably involved in mitochondrial export. Confers resistance to the anti-pneumocystis carinii drug pentamidine. May act by the removal of pentamidine, or its damage targets, from the matrix by an active-transport mechanism. This is Pentamidine resistance factor, mitochondrial (PNT1) from Saccharomyces cerevisiae (strain ATCC 204508 / S288c) (Baker's yeast).